A 298-amino-acid chain; its full sequence is Glutamyl-Q tRNA(Asp) synthetase (298 aa).

Residues 9–13 (RFAPS) and E45 contribute to the L-glutamate site. A 'HIGH' region motif is present at residues 12–22 (PSPSGELHFGS). C101, C103, Y115, and C119 together coordinate Zn(2+). L-glutamate contacts are provided by Y172 and R190. The short motif at 228-232 (KLSKQ) is the 'KMSKS' region element. ATP is bound at residue K231.

The protein belongs to the class-I aminoacyl-tRNA synthetase family. GluQ subfamily. Requires Zn(2+) as cofactor.

Catalyzes the tRNA-independent activation of glutamate in presence of ATP and the subsequent transfer of glutamate onto a tRNA(Asp). Glutamate is transferred on the 2-amino-5-(4,5-dihydroxy-2-cyclopenten-1-yl) moiety of the queuosine in the wobble position of the QUC anticodon. This chain is Glutamyl-Q tRNA(Asp) synthetase, found in Cronobacter sakazakii (strain ATCC BAA-894) (Enterobacter sakazakii).